Reading from the N-terminus, the 267-residue chain is Tryptophan synthase alpha chain (267 aa).

Catalysis depends on proton acceptor residues E51 and D62.

The protein belongs to the TrpA family. As to quaternary structure, tetramer of two alpha and two beta chains.

The enzyme catalyses (1S,2R)-1-C-(indol-3-yl)glycerol 3-phosphate + L-serine = D-glyceraldehyde 3-phosphate + L-tryptophan + H2O. The protein operates within amino-acid biosynthesis; L-tryptophan biosynthesis; L-tryptophan from chorismate: step 5/5. The alpha subunit is responsible for the aldol cleavage of indoleglycerol phosphate to indole and glyceraldehyde 3-phosphate. The chain is Tryptophan synthase alpha chain from Prochlorococcus marinus (strain SARG / CCMP1375 / SS120).